A 262-amino-acid polypeptide reads, in one-letter code: Ribonuclease 3 (262 aa).

In terms of domain architecture, RNase III spans leucine 18 to glycine 141. Glutamate 59 is a Mg(2+) binding site. The active site involves aspartate 63. Positions 127 and 130 each coordinate Mg(2+). Glutamate 130 is an active-site residue.

Belongs to the ribonuclease III family. In terms of assembly, homodimer. Requires Mg(2+) as cofactor.

Its subcellular location is the cytoplasm. It catalyses the reaction Endonucleolytic cleavage to 5'-phosphomonoester.. Functionally, digests double-stranded RNA. Involved in the processing of primary rRNA transcript to yield the immediate precursors to the large and small rRNAs (23S and 16S). Processes some mRNAs, and tRNAs when they are encoded in the rRNA operon. Processes pre-crRNA and tracrRNA of type II CRISPR loci if present in the organism. The polypeptide is Ribonuclease 3 (Mycoplasma genitalium (strain ATCC 33530 / DSM 19775 / NCTC 10195 / G37) (Mycoplasmoides genitalium)).